An 850-amino-acid polypeptide reads, in one-letter code: Response regulator sskA (850 aa).

Disordered regions lie at residues 1 to 225 and 419 to 542; these read MPDR…GASS and IPQR…GQSP. Low complexity predominate over residues 7-25; sequence SQLLKSKLLRRSSTTATTS. Over residues 117-138 the composition is skewed to polar residues; that stretch reads GANSRQEGSQNGSIQQSPTFTR. The segment covering 144 to 163 has biased composition (basic and acidic residues); it reads QLTEEKDKGKLQSREGDQRG. Residues 177-196 are compositionally biased toward polar residues; the sequence is SDPQYSLTTELANKPSTPQT. Over residues 436–445 the composition is skewed to basic and acidic residues; it reads HHSEPGEHGE. Over residues 477-490 the composition is skewed to polar residues; the sequence is PSISILTTDSNMAS. The segment covering 492–511 has biased composition (pro residues); that stretch reads PQPPVAAPQVPTPPGPPPES. A Response regulatory domain is found at 558-719; sequence NVLIVEDNII…WLEQKVTEWG (162 aa). Asp-607 carries the 4-aspartylphosphate modification. Residues 736 to 850 are disordered; sequence FADEPQSSSP…DEEQQALDAT (115 aa). Low complexity predominate over residues 762-782; that stretch reads SSRTSTSPSSAAVNATARAFA. Residues 819 to 828 are compositionally biased toward polar residues; it reads TLDSPASPLT. Acidic residues predominate over residues 839 to 850; sequence PGDEEQQALDAT.

This sequence belongs to the SSK1 family.

The protein localises to the cytoplasm. Its function is as follows. Final receptor of the osmolarity two-component system regulatory system, which controls activity of the sakA mitogen-activated protein kinase (MAPK) pathway in response to changes in the osmolarity of the extracellular environment. Regulates the germination in the airways that drives enhanced disease initiation and inflammation in the lungs. This is Response regulator sskA from Aspergillus fumigatus (strain ATCC MYA-4609 / CBS 101355 / FGSC A1100 / Af293) (Neosartorya fumigata).